The sequence spans 217 residues: N-(5'-phosphoribosyl)anthranilate isomerase (217 aa).

The protein belongs to the TrpF family.

It catalyses the reaction N-(5-phospho-beta-D-ribosyl)anthranilate = 1-(2-carboxyphenylamino)-1-deoxy-D-ribulose 5-phosphate. It participates in amino-acid biosynthesis; L-tryptophan biosynthesis; L-tryptophan from chorismate: step 3/5. This chain is N-(5'-phosphoribosyl)anthranilate isomerase, found in Chlorobium phaeobacteroides (strain BS1).